The following is a 681-amino-acid chain: Type VI secretion system spike protein VgrG2 (681 aa).

The disordered stretch occupies residues 284-309; it reads AVAGSGKSNSSALQPGQTFSLTEHPN. Over residues 289–309 the composition is skewed to polar residues; it reads GKSNSSALQPGQTFSLTEHPN.

Belongs to the VgrG protein family.

Part of the type VI secretion system specialized secretion system, which delivers several virulence factors in both prokaryotic and eukaryotic cells during infection. Plays an essential role in bacterial mobility and biofilm formation. The chain is Type VI secretion system spike protein VgrG2 from Aeromonas hydrophila.